The sequence spans 692 residues: Proprotein convertase subtilisin/kexin type 9 (692 aa).

The first 30 residues, 1 to 30 (MGTVSSRRSWWPLPLLLLLLLLLGPAGARA), serve as a signal peptide directing secretion. The propeptide occupies 31 to 152 (QEDEDGDYEE…IEEDSSVFAQ (122 aa)). A Sulfotyrosine modification is found at Tyr-38. A Phosphoserine modification is found at Ser-47. Positions 77 to 149 (TYVVVLKEET…VDYIEEDSSV (73 aa)) constitute an Inhibitor I9 domain. In terms of domain architecture, Peptidase S8 spans 155–461 (PWNLERITPP…GWQLFCRTVW (307 aa)). Active-site charge relay system residues include Asp-186 and His-226. Cystine bridges form between Cys-223/Cys-255 and Cys-323/Cys-358. Ser-386 (charge relay system) is an active-site residue. The interval 450-692 (GAGWQLFCRT…HLAQASQELQ (243 aa)) is C-terminal domain. Intrachain disulfides connect Cys-457-Cys-527, Cys-477-Cys-526, and Cys-486-Cys-509. The N-linked (GlcNAc...) asparagine glycan is linked to Asn-533. Cystine bridges form between Cys-534–Cys-601, Cys-552–Cys-600, Cys-562–Cys-588, Cys-608–Cys-679, Cys-626–Cys-678, and Cys-635–Cys-654. Phosphoserine is present on Ser-688.

It belongs to the peptidase S8 family. Monomer. Can self-associate to form dimers and higher multimers which may have increased LDLR degrading activity. The precursor protein but not the mature protein may form multimers. Interacts with APOB, VLDLR, LRP8/APOER2 and BACE1. The full-length immature form (pro-PCSK9) interacts with SCNN1A, SCNN1B and SCNN1G. The pro-PCSK9 form (via C-terminal domain) interacts with LDLR. Interacts (via the C-terminal domain) with ANXA2 (via repeat Annexin 1); the interaction inhibits the degradation of LDLR. Ca(2+) is required as a cofactor. Post-translationally, cleavage by furin and PCSK5 generates a truncated inactive protein that is unable to induce LDLR degradation. Undergoes autocatalytic cleavage in the endoplasmic reticulum to release the propeptide from the N-terminus and the cleavage of the propeptide is strictly required for its maturation and activation. The cleaved propeptide however remains associated with the catalytic domain through non-covalent interactions, preventing potential substrates from accessing its active site. As a result, it is secreted from cells as a propeptide-containing, enzymatically inactive protein. In terms of processing, phosphorylation protects the propeptide against proteolysis.

It is found in the cytoplasm. Its subcellular location is the secreted. The protein localises to the endosome. It localises to the lysosome. The protein resides in the cell surface. It is found in the endoplasmic reticulum. Its subcellular location is the golgi apparatus. Its activity is regulated as follows. Its proteolytic activity is autoinhibited by the non-covalent binding of the propeptide to the catalytic domain. Inhibited by EGTA. Functionally, crucial player in the regulation of plasma cholesterol homeostasis. Binds to low-density lipid receptor family members: low density lipoprotein receptor (LDLR), very low density lipoprotein receptor (VLDLR), apolipoprotein E receptor (LRP1/APOER) and apolipoprotein receptor 2 (LRP8/APOER2), and promotes their degradation in intracellular acidic compartments. Acts via a non-proteolytic mechanism to enhance the degradation of the hepatic LDLR through a clathrin LDLRAP1/ARH-mediated pathway. May prevent the recycling of LDLR from endosomes to the cell surface or direct it to lysosomes for degradation. Can induce ubiquitination of LDLR leading to its subsequent degradation. Inhibits intracellular degradation of APOB via the autophagosome/lysosome pathway in a LDLR-independent manner. Involved in the disposal of non-acetylated intermediates of BACE1 in the early secretory pathway. Inhibits epithelial Na(+) channel (ENaC)-mediated Na(+) absorption by reducing ENaC surface expression primarily by increasing its proteasomal degradation. Regulates neuronal apoptosis via modulation of LRP8/APOER2 levels and related anti-apoptotic signaling pathways. The chain is Proprotein convertase subtilisin/kexin type 9 (PCSK9) from Pan paniscus (Pygmy chimpanzee).